A 414-amino-acid polypeptide reads, in one-letter code: Serine hydroxymethyltransferase (414 aa).

(6S)-5,6,7,8-tetrahydrofolate-binding positions include Leu-121 and 125 to 127; that span reads GHL. Position 229 is an N6-(pyridoxal phosphate)lysine (Lys-229).

The protein belongs to the SHMT family. In terms of assembly, homodimer. Requires pyridoxal 5'-phosphate as cofactor.

Its subcellular location is the cytoplasm. The catalysed reaction is (6R)-5,10-methylene-5,6,7,8-tetrahydrofolate + glycine + H2O = (6S)-5,6,7,8-tetrahydrofolate + L-serine. Its pathway is one-carbon metabolism; tetrahydrofolate interconversion. It functions in the pathway amino-acid biosynthesis; glycine biosynthesis; glycine from L-serine: step 1/1. Catalyzes the reversible interconversion of serine and glycine with tetrahydrofolate (THF) serving as the one-carbon carrier. This reaction serves as the major source of one-carbon groups required for the biosynthesis of purines, thymidylate, methionine, and other important biomolecules. Also exhibits THF-independent aldolase activity toward beta-hydroxyamino acids, producing glycine and aldehydes, via a retro-aldol mechanism. The protein is Serine hydroxymethyltransferase of Acidovorax ebreus (strain TPSY) (Diaphorobacter sp. (strain TPSY)).